A 114-amino-acid chain; its full sequence is T cell receptor beta variable 10-3 (114 aa).

The signal sequence occupies residues 1–21 (MGTRLFFYVALCLLWTGHMDA). Residues 22–114 (GITQSPRHKV…TSVYFCAISE (93 aa)) form the Ig-like domain. C42 and C110 are joined by a disulfide.

In terms of assembly, alpha-beta TR is a heterodimer composed of an alpha and beta chain; disulfide-linked. The alpha-beta TR is associated with the transmembrane signaling CD3 coreceptor proteins to form the TR-CD3 (TcR or TCR). The assembly of alpha-beta TR heterodimers with CD3 occurs in the endoplasmic reticulum where a single alpha-beta TR heterodimer associates with one CD3D-CD3E heterodimer, one CD3G-CD3E heterodimer and one CD247 homodimer forming a stable octameric structure. CD3D-CD3E and CD3G-CD3E heterodimers preferentially associate with TR alpha and TR beta chains, respectively. The association of the CD247 homodimer is the last step of TcR assembly in the endoplasmic reticulum and is required for transport to the cell surface.

The protein localises to the cell membrane. V region of the variable domain of T cell receptor (TR) beta chain that participates in the antigen recognition. Alpha-beta T cell receptors are antigen specific receptors which are essential to the immune response and are present on the cell surface of T lymphocytes. Recognize peptide-major histocompatibility (MH) (pMH) complexes that are displayed by antigen presenting cells (APC), a prerequisite for efficient T cell adaptive immunity against pathogens. Binding of alpha-beta TR to pMH complex initiates TR-CD3 clustering on the cell surface and intracellular activation of LCK that phosphorylates the ITAM motifs of CD3G, CD3D, CD3E and CD247 enabling the recruitment of ZAP70. In turn ZAP70 phosphorylates LAT, which recruits numerous signaling molecules to form the LAT signalosome. The LAT signalosome propagates signal branching to three major signaling pathways, the calcium, the mitogen-activated protein kinase (MAPK) kinase and the nuclear factor NF-kappa-B (NF-kB) pathways, leading to the mobilization of transcription factors that are critical for gene expression and essential for T cell growth and differentiation. The T cell repertoire is generated in the thymus, by V-(D)-J rearrangement. This repertoire is then shaped by intrathymic selection events to generate a peripheral T cell pool of self-MH restricted, non-autoaggressive T cells. Post-thymic interaction of alpha-beta TR with the pMH complexes shapes TR structural and functional avidity. This is T cell receptor beta variable 10-3 from Homo sapiens (Human).